Here is an 877-residue protein sequence, read N- to C-terminus: Transcriptional corepressor SEUSS (877 aa).

Disordered regions lie at residues 1–42 (MVPS…VSPR) and 272–295 (LKSM…PLRP). Residues 272–292 (LKSMPQQRPQLPQQFQQQNLP) are compositionally biased toward low complexity. The dimerization stretch occupies residues 321-563 (PEDNNIEFWR…ETRTGPIESL (243 aa)). A Nuclear localization signal motif is present at residues 330-344 (RKFVAEYFAPNAKKR). Disordered regions lie at residues 560-599 (IESL…QQQQ), 612-633 (QQTV…LMQG), and 666-753 (GRHQ…NESS). A coiled-coil region spans residues 582–618 (QQASDQLRQQQQQQQQQQQQQQQQQQQQQQQQTVSQN). Over residues 590–599 (QQQQQQQQQQ) the composition is skewed to low complexity. Positions 614–633 (TVSQNTNSDQSSRQVALMQG) are enriched in polar residues. Low complexity-rich tracts occupy residues 688–703 (QSPS…SSQQ) and 711–725 (QSPT…PSQN). The segment covering 726–741 (GIPSVNHMGSTNSPAM) has biased composition (polar residues).

It belongs to the adn1/SEU family. Forms a corepressor complex with LUG; LUG is the transcription repressor subunit and SEU the specific DNA-binding adapter. Interacts with AGL24-AP1 and SVP-AP1 dimers when complexed to SEU. Interacts with AP1/AGL7 and SEP3/AGL9. Binds to LUH. Expressed in root, leaves, seedlings, vegetative and reproductive shoot apical meristems, seeds, floral meristems and all floral organs.

The protein localises to the nucleus. Its subcellular location is the nucleoplasm. Its function is as follows. DNA-binding adapter subunit of the SEU-LUG transcriptional corepressor of the C class floral homeotic gene AGAMOUS during the early stages of floral meristem development. Is part of the A class cadastral complex that define the boundaries between the A and C class homeotic genes expression and function. Interacts together with APETALA2 and LEUNIG to repress AGAMOUS expression. In association with LUG, regulates petal shape through AGAMOUS-independent mechanisms. Controls cell division during petal development and enable the proper patterning of petal blade vasculature. Required for the proper elaboration of petal polarity along the adaxial/abaxial axis. May act through direct or indirect regulation of PHABULOSA and YAB1 and thus regulate cellular proliferation within the developing petal blade. In association with AINTEGUMENTA (ANT), coordinates patterning cues and cellular proliferation along the three positional axes of the developing gynoecium. Required for the development of the medial ridge and subsequent ovule initiation. The sequence is that of Transcriptional corepressor SEUSS (SEU) from Arabidopsis thaliana (Mouse-ear cress).